We begin with the raw amino-acid sequence, 31 residues long: DQPVAMEEGLKFAIREGGRTVGAGQVVKIVK.

The protein belongs to the GTP-binding elongation factor family. EF-Tu/EF-1A subfamily. In terms of assembly, monomer.

The protein resides in the cytoplasm. Functionally, this protein promotes the GTP-dependent binding of aminoacyl-tRNA to the A-site of ribosomes during protein biosynthesis. This Streptomyces laurentii protein is Elongation factor Tu (tuf).